A 520-amino-acid polypeptide reads, in one-letter code: Catalase easC (520 aa).

The active site involves histidine 71. Tyrosine 361 lines the heme pocket.

It belongs to the catalase family. Requires heme as cofactor.

It functions in the pathway alkaloid biosynthesis; ergot alkaloid biosynthesis. Catalase; part of the gene cluster that mediates the biosynthesis of fumiclavanine C, a fungal ergot alkaloid. DmaW catalyzes the first step of ergot alkaloid biosynthesis by condensing dimethylallyl diphosphate (DMAP) and tryptophan to form 4-dimethylallyl-L-tryptophan. The second step is catalyzed by the methyltransferase easF that methylates 4-dimethylallyl-L-tryptophan in the presence of S-adenosyl-L-methionine, resulting in the formation of 4-dimethylallyl-L-abrine. The catalase easC and the FAD-dependent oxidoreductase easE then transform 4-dimethylallyl-L-abrine to chanoclavine-I which is further oxidized by EasD in the presence of NAD(+), resulting in the formation of chanoclavine-I aldehyde. EasA reduces chanoclavine-I aldehyde to dihydrochanoclavine-I aldehyde that spontaneously dehydrates to form 6,8-dimethyl-6,7-didehydroergoline. EasG then catalyzes the reduction of 6,8-dimethyl-6,7-didehydroergoline to form festuclavine. Hydrolysis of festuclavine by easM then leads to the formation of fumigaclavine B which is in turn acetylated by easN to fumigaclavine A. Finally, easL catalyzes the conversion of fumigaclavine A into fumigaclavine C by attaching a dimethylallyl moiety to C-2 of the indole nucleus. The polypeptide is Catalase easC (Aspergillus fumigatus (strain ATCC MYA-4609 / CBS 101355 / FGSC A1100 / Af293) (Neosartorya fumigata)).